A 162-amino-acid polypeptide reads, in one-letter code: Ribosome maturation factor RimP (162 aa).

Belongs to the RimP family.

It is found in the cytoplasm. Required for maturation of 30S ribosomal subunits. The chain is Ribosome maturation factor RimP from Leptospira biflexa serovar Patoc (strain Patoc 1 / Ames).